Reading from the N-terminus, the 298-residue chain is MVDTGTDRVKRGMAEMQKGGVIMDVVNAEQAKIAEEAGAVAVMALERVPADIRAAGGVARMADPTIVEEVMNAVSIPVMAKCRIGHIVEARVLEALGVDYIDESEVLTPADEVYHLNKRDFTVPFVCGARDLGEAARRIGEGASMIRTKGEPGTGNIVEAVRHMRMMQAQIRKVSNMSTDELMTEAKNIGAPYELLLSIKETGELPVVNFAAGGVATPADAALMMQLGADGVFVGSGIFKSETPEKFARAIVEATTHYEDYDLIAKLSKGLGTAMKGIEISTLDASERMQERGWEKGS.

D24 provides a ligand contact to D-ribose 5-phosphate. K81 acts as the Schiff-base intermediate with D-ribose 5-phosphate in catalysis. D-ribose 5-phosphate is bound at residue G153. R165 serves as a coordination point for D-glyceraldehyde 3-phosphate. D-ribose 5-phosphate is bound by residues G214 and 235 to 236 (GS).

The protein belongs to the PdxS/SNZ family. In terms of assembly, in the presence of PdxT, forms a dodecamer of heterodimers.

It carries out the reaction aldehydo-D-ribose 5-phosphate + D-glyceraldehyde 3-phosphate + L-glutamine = pyridoxal 5'-phosphate + L-glutamate + phosphate + 3 H2O + H(+). The protein operates within cofactor biosynthesis; pyridoxal 5'-phosphate biosynthesis. Functionally, catalyzes the formation of pyridoxal 5'-phosphate from ribose 5-phosphate (RBP), glyceraldehyde 3-phosphate (G3P) and ammonia. The ammonia is provided by the PdxT subunit. Can also use ribulose 5-phosphate and dihydroxyacetone phosphate as substrates, resulting from enzyme-catalyzed isomerization of RBP and G3P, respectively. The protein is Pyridoxal 5'-phosphate synthase subunit PdxS of Halalkalibacterium halodurans (strain ATCC BAA-125 / DSM 18197 / FERM 7344 / JCM 9153 / C-125) (Bacillus halodurans).